A 75-amino-acid chain; its full sequence is MGIKVKFPFEYTRFEKARIIGARALQIAMGAPVLIETDKTEPLEIALEEFNRGVIPITVRRRRNEFVWLERYDLF.

This sequence belongs to the archaeal Rpo6/eukaryotic RPB6 RNA polymerase subunit family. In terms of assembly, part of the RNA polymerase complex.

The protein resides in the cytoplasm. It catalyses the reaction RNA(n) + a ribonucleoside 5'-triphosphate = RNA(n+1) + diphosphate. DNA-dependent RNA polymerase (RNAP) catalyzes the transcription of DNA into RNA using the four ribonucleoside triphosphates as substrates. This is DNA-directed RNA polymerase subunit Rpo6 from Archaeoglobus fulgidus (strain ATCC 49558 / DSM 4304 / JCM 9628 / NBRC 100126 / VC-16).